Consider the following 599-residue polypeptide: MFS-type transporter ucsM (599 aa).

Basic and acidic residues predominate over residues 23–34; it reads AHHHGKEREAHR. Positions 23–42 are disordered; it reads AHHHGKEREAHRQSLSSVPG. The next 8 helical transmembrane spans lie at 147–167, 178–198, 204–224, 263–283, 291–311, 386–406, 424–444, and 454–474; these read VALG…GAWL, ILIG…GAVP, GKGT…AGLF, IMLI…ATVY, WLAF…LWYL, IFLY…ILPS, FNPI…YPAL, and ISRI…SSLV. N-linked (GlcNAc...) asparagine glycosylation is present at Asn517. Helical transmembrane passes span 539 to 559 and 563 to 583; these read LFLF…PAIV and LVWV…IFWV.

It belongs to the major facilitator superfamily. Proton-dependent oligopeptide transporter (POT/PTR) (TC 2.A.17) family.

It localises to the membrane. Functionally, MFS-type transporter; part of the gene cluster that mediates the biosynthesis of UCS1025A, a member of the pyrrolizidinone family that acts as a strong telomerase inhibitor and displays potent antibacterial and antitumor properties. These compounds share a hemiaminal-containing pyrrolizidinone core fused with a gamma-lactone, giving a furopyrrolizidine that is connected to a decalin fragment. This chain is MFS-type transporter ucsM, found in Acremonium sp.